The chain runs to 642 residues: CCR4-NOT transcription complex subunit 11 (642 aa).

Disordered regions lie at residues 78–167 and 589–627; these read SSNS…PTST and NNNT…NNLI. Residues 589-625 show a composition bias toward low complexity; it reads NNNTNNTNTNTNTNNSNTTNTNNNNNNNNNNNNNNNN.

This sequence belongs to the CNOT11 family. Component of the CCR4-NOT complex.

It is found in the cytoplasm. The protein resides in the nucleus. Component of the CCR4-NOT complex which is one of the major cellular mRNA deadenylases and is linked to various cellular processes including bulk mRNA degradation, miRNA-mediated repression, translational repression during translational initiation and general transcription regulation. Additional complex functions may be a consequence of its influence on mRNA expression. This chain is CCR4-NOT transcription complex subunit 11 (cnot11), found in Dictyostelium discoideum (Social amoeba).